Reading from the N-terminus, the 1092-residue chain is Leukemia inhibitory factor receptor (1092 aa).

A signal peptide spans methionine 1–glycine 43. Residues leucine 44–serine 828 are Extracellular-facing. A Fibronectin type-III 1 domain is found at lysine 45–aspartate 126. 2 disulfides stabilise this stretch: cysteine 53-cysteine 63 and cysteine 80-cysteine 88. Residues asparagine 164, asparagine 199, asparagine 238, and asparagine 261 are each glycosylated (N-linked (GlcNAc...) asparagine). Intrachain disulfides connect cysteine 208/cysteine 265 and cysteine 336/cysteine 346. 5 Fibronectin type-III domains span residues valine 330–histidine 429, aspartate 430–threonine 529, glycine 533–aspartate 624, proline 622–valine 714, and proline 719–serine 828. N-linked (GlcNAc...) asparagine glycans are attached at residues asparagine 385, asparagine 402, asparagine 421, asparagine 440, asparagine 453, and asparagine 476. The cysteines at positions 461 and 506 are disulfide-linked. The WSXWS motif signature appears at tryptophan 514–serine 518. Residues asparagine 567, asparagine 647, asparagine 658, asparagine 675, asparagine 724, and asparagine 782 are each glycosylated (N-linked (GlcNAc...) asparagine). A helical membrane pass occupies residues valine 829–cysteine 853. Residues tyrosine 854–aspartate 1092 are Cytoplasmic-facing. The Box 1 motif signature appears at phenylalanine 864–glutamate 872. Phosphoserine occurs at positions 922 and 1039. Residues glutamate 1009–aspartate 1092 form a disordered region. Composition is skewed to polar residues over residues alanine 1027–glutamine 1062 and serine 1081–aspartate 1092.

It belongs to the type I cytokine receptor family. Type 2 subfamily. In terms of assembly, heterodimer composed of LIFR and IL6ST. The heterodimer formed by LIFR and IL6ST interacts with the complex formed by CNTF and CNTFR. Placenta, liver, kidney, heart, lung, brain, and embryos. The liver may be the primary site of synthesis of the secreted form.

The protein resides in the cell membrane. Its subcellular location is the secreted. Functionally, signal-transducing molecule. May have a common pathway with IL6ST. The soluble form inhibits the biological activity of LIF by blocking its binding to receptors on target cells. This chain is Leukemia inhibitory factor receptor (Lifr), found in Mus musculus (Mouse).